The sequence spans 180 residues: Large ribosomal subunit protein uL10 (180 aa).

It belongs to the universal ribosomal protein uL10 family. Part of the ribosomal stalk of the 50S ribosomal subunit. The N-terminus interacts with L11 and the large rRNA to form the base of the stalk. The C-terminus forms an elongated spine to which L12 dimers bind in a sequential fashion forming a multimeric L10(L12)X complex.

In terms of biological role, forms part of the ribosomal stalk, playing a central role in the interaction of the ribosome with GTP-bound translation factors. In Thermosipho melanesiensis (strain DSM 12029 / CIP 104789 / BI429), this protein is Large ribosomal subunit protein uL10.